The primary structure comprises 147 residues: UPF0208 membrane protein PM0703 (147 aa).

The next 2 helical transmembrane spans lie at 32–52 and 65–85; these read VIKA…FAIT and LAIA…GLYW.

The protein belongs to the UPF0208 family.

It is found in the cell inner membrane. This Pasteurella multocida (strain Pm70) protein is UPF0208 membrane protein PM0703.